The sequence spans 202 residues: Lipoprotein signal peptidase (202 aa).

The interval 1 to 29 (MPDEPTGSADPLTSTEEAGGAGEPNAPAP) is disordered. 3 helical membrane-spanning segments follow: residues 35–55 (MLLSVAVVVLTLDIVTKVVAV), 88–108 (GYTWVLTLIATGVVVGIFWMG), and 112–132 (VSPWWALGLGMILGGAMGNLV). Catalysis depends on residues Asp148 and Asp162. Residues 160-180 (VADPSVVGGAILLVILSIFGF) traverse the membrane as a helical segment.

It belongs to the peptidase A8 family.

Its subcellular location is the cell membrane. It carries out the reaction Release of signal peptides from bacterial membrane prolipoproteins. Hydrolyzes -Xaa-Yaa-Zaa-|-(S,diacylglyceryl)Cys-, in which Xaa is hydrophobic (preferably Leu), and Yaa (Ala or Ser) and Zaa (Gly or Ala) have small, neutral side chains.. It participates in protein modification; lipoprotein biosynthesis (signal peptide cleavage). Its function is as follows. This protein specifically catalyzes the removal of signal peptides from prolipoproteins. This is Lipoprotein signal peptidase from Mycobacterium bovis (strain ATCC BAA-935 / AF2122/97).